The primary structure comprises 263 residues: MKNNYTSLKSPIDEEDELKTDHEIDLEKGPLPEYDSEEESTLPPYSDHARLKNPPYTHREKNPSRSTDNSSPFLIKLLISFTSIILFNAPAVCYLKYKDAFFKNYGAAEWTLFGFWCLVCTLALISLTYFYETWTKAVKVTVISLAQCVKACGKGIKHFLKNWRNMIFAFCKSSLFCLVLLKAENELSSHLGDQQWGWKCSASAFTFMAVSSILIFIAETVEPGSCSTDLVKRVQAYCGYEARQYASSNTAIPLHEMNPENEA.

Residues 1–68 (MKNNYTSLKS…REKNPSRSTD (68 aa)) form a disordered region. Residues 19–30 (KTDHEIDLEKGP) show a composition bias toward basic and acidic residues. 3 helical membrane-spanning segments follow: residues 73 to 93 (FLIKLLISFTSIILFNAPAVC), 110 to 130 (WTLFGFWCLVCTLALISLTYF), and 201 to 221 (SASAFTFMAVSSILIFIAETV).

Belongs to the WTF family. In terms of assembly, homomer. Interacts with other proteins that exhibit high sequence similarity.

Its subcellular location is the spore membrane. It localises to the vacuole membrane. In terms of biological role, acts as a suppressor component of the dual wtf meiotic drive system, and can suppress but not confer meiotic drive by compatible poisons. Wtf meiotic drive systems promote unequal transmission of alleles from the parental zygote to progeny spores by encoding a poison and an antidote from the same locus; the poison is trans-acting and forms toxic aggregates in all spores within an ascus, wherease the antidote is spore-specific and targets aggregates for degradation by the vacuole. Meiotic drive by wtf systems therefore lead to poisoning of all progeny that do not inherit the dual poison/antidote allele, or express a compatible antidote. The protein is Meiotic drive suppressor wtf6 of Schizosaccharomyces kambucha (Fission yeast).